A 541-amino-acid chain; its full sequence is ATP synthase subunit alpha (541 aa).

Residue 173–180 (GDRQTGKT) participates in ATP binding. Basic and acidic residues predominate over residues 517 to 527 (GIEPGVEEHES). The disordered stretch occupies residues 517-541 (GIEPGVEEHESLGATAVNQETIVKK). Polar residues predominate over residues 532-541 (AVNQETIVKK).

This sequence belongs to the ATPase alpha/beta chains family. As to quaternary structure, F-type ATPases have 2 components, CF(1) - the catalytic core - and CF(0) - the membrane proton channel. CF(1) has five subunits: alpha(3), beta(3), gamma(1), delta(1), epsilon(1). CF(0) has three main subunits: a(1), b(2) and c(9-12). The alpha and beta chains form an alternating ring which encloses part of the gamma chain. CF(1) is attached to CF(0) by a central stalk formed by the gamma and epsilon chains, while a peripheral stalk is formed by the delta and b chains.

The protein localises to the cell membrane. It catalyses the reaction ATP + H2O + 4 H(+)(in) = ADP + phosphate + 5 H(+)(out). Produces ATP from ADP in the presence of a proton gradient across the membrane. The alpha chain is a regulatory subunit. This Kocuria rhizophila (strain ATCC 9341 / DSM 348 / NBRC 103217 / DC2201) protein is ATP synthase subunit alpha.